We begin with the raw amino-acid sequence, 54 residues long: Toxin AnmTx Cj 1c-1 (54 aa).

The first 7 residues, 1-7 (MLNKRGV), serve as a signal peptide directing secretion. 3 disulfide bridges follow: Cys-9–Cys-50, Cys-11–Cys-41, and Cys-33–Cys-51. The residue at position 53 (Glu-53) is a Glutamic acid 1-amide.

This sequence belongs to the sea anemone sodium channel inhibitory toxin family. Type I subfamily. Post-translationally, contains 3 disulfide bonds.

The protein resides in the secreted. The protein localises to the nematocyst. Functionally, in vivo, induces marked paralysis on shrimps (C.multidentata) at 10-20 seconds after injection and a weak toxicity when injected into insect larvae (M.domestica). This chain is Toxin AnmTx Cj 1c-1, found in Epiactis japonica (Sea anemone).